A 280-amino-acid polypeptide reads, in one-letter code: MTTQIFQLPLKYCASSFSSTGQRNYGASSSPSPIVICKSNGISDGLWVKRRKNNRRFGSLIVKQEKGDVTEIRVPVPLTLEQQEKEKQNRDDEEDEIDEGDVDPEDLKYVNEIKRVIELLRRNRDMIFSEVKLTIMIEDPRELERRRLLGIEDADTPSRDDLAEALEQVNDGKIPKDRATLRMLHEEMIRWPNLEVEVSKKQRGKSMYAKSTDTGIDPKEAAKRLNVEWDSAAAIEEVDVDDEQGVVTKVAGYGALYFVSALPVIIGISVVLILFYNSLQ.

The N-terminal 62 residues, 1-62 (MTTQIFQLPL…NNRRFGSLIV (62 aa)), are a transit peptide targeting the chloroplast. The tract at residues 75–103 (PVPLTLEQQEKEKQNRDDEEDEIDEGDVD) is disordered. Residues 91 to 103 (DDEEDEIDEGDVD) show a composition bias toward acidic residues. The chain crosses the membrane as a helical span at residues 255–275 (ALYFVSALPVIIGISVVLILF).

The protein belongs to the Y3IP1/CEST family. As to quaternary structure, interacts with Ycf3. Expressed in cotyledons, rosette and cauline leaves, stems and sepals.

Its subcellular location is the plastid. The protein localises to the chloroplast thylakoid membrane. Its function is as follows. Nuclear genome-encoded factor that participates in photosystem I (PSI) biogenesis. Cooperates with the plastid genome-encoded protein PSI assembly Ycf3 in the assembly of stable PSI units in the thylakoid membrane. Involved in light-induced chloroplast development and growth. Involved in the plant response to abiotic and photooxidative stresses. May be involved in the suppression of photooxidative damage. The polypeptide is Ycf3-interacting protein 1, chloroplastic (Arabidopsis thaliana (Mouse-ear cress)).